A 600-amino-acid polypeptide reads, in one-letter code: DDB1- and CUL4-associated factor 15 (600 aa).

The interval 1–29 is disordered; it reads MAPSSKSERNSGAGSAGGGPGGTGGKRAV. The span at 14–27 shows a compositional bias: gly residues; sequence GSAGGGPGGTGGKR. Ser-50 bears the Phosphoserine mark. Residues Cys-193, Cys-196, Cys-211, and His-214 each coordinate Zn(2+). Position 314 is a phosphoserine (Ser-314). Residues 334–343 show a composition bias toward basic and acidic residues; sequence AKGSPLEETR. Positions 334–384 are disordered; it reads AKGSPLEETRLPSSLGPSSSRCRPSLEPQAPSGEVVPRDSPPAAETTAPEP. Composition is skewed to low complexity over residues 344–359 and 374–384; these read LPSS…RPSL and PPAAETTAPEP.

In terms of assembly, component of the DCX(DCAF15) complex, also named CLR4(DCAF15) complex, composed of DCAF15, DDB1, cullin-4 (CUL4A or CUL4B), DDA1 and RBX1.

The protein operates within protein modification; protein ubiquitination. Substrate-recognition component of the DCX(DCAF15) complex, a cullin-4-RING E3 ubiquitin-protein ligase complex that mediates ubiquitination and degradation of target proteins. The DCX(DCAF15) complex acts as a regulator of the natural killer (NK) cells effector functions, possibly by mediating ubiquitination and degradation of cohesin subunits SMC1A and SMC3. May play a role in the activation of antigen-presenting cells (APC) and their interaction with NK cells. This chain is DDB1- and CUL4-associated factor 15, found in Mus musculus (Mouse).